A 415-amino-acid chain; its full sequence is Imidazolonepropionase (415 aa).

Fe(3+) is bound by residues His-76 and His-78. Residues His-76 and His-78 each contribute to the Zn(2+) site. 3 residues coordinate 4-imidazolone-5-propanoate: Arg-85, Tyr-148, and His-181. Position 148 (Tyr-148) interacts with N-formimidoyl-L-glutamate. Position 246 (His-246) interacts with Fe(3+). His-246 provides a ligand contact to Zn(2+). Glu-249 is a binding site for 4-imidazolone-5-propanoate. Asp-320 serves as a coordination point for Fe(3+). Position 320 (Asp-320) interacts with Zn(2+). N-formimidoyl-L-glutamate-binding residues include Asn-322 and Gly-324. Thr-325 contributes to the 4-imidazolone-5-propanoate binding site.

The protein belongs to the metallo-dependent hydrolases superfamily. HutI family. Zn(2+) serves as cofactor. Fe(3+) is required as a cofactor.

Its subcellular location is the cytoplasm. The catalysed reaction is 4-imidazolone-5-propanoate + H2O = N-formimidoyl-L-glutamate. It participates in amino-acid degradation; L-histidine degradation into L-glutamate; N-formimidoyl-L-glutamate from L-histidine: step 3/3. Its function is as follows. Catalyzes the hydrolytic cleavage of the carbon-nitrogen bond in imidazolone-5-propanoate to yield N-formimidoyl-L-glutamate. It is the third step in the universal histidine degradation pathway. In Caldanaerobacter subterraneus subsp. tengcongensis (strain DSM 15242 / JCM 11007 / NBRC 100824 / MB4) (Thermoanaerobacter tengcongensis), this protein is Imidazolonepropionase.